Here is a 301-residue protein sequence, read N- to C-terminus: Glucose-1-phosphate adenylyltransferase large subunit (301 aa).

Belongs to the bacterial/plant glucose-1-phosphate adenylyltransferase family. In terms of assembly, heterotetramer.

It localises to the plastid. The protein localises to the chloroplast. It is found in the amyloplast. It carries out the reaction alpha-D-glucose 1-phosphate + ATP + H(+) = ADP-alpha-D-glucose + diphosphate. The protein operates within glycan biosynthesis; starch biosynthesis. Insensitive to 3'phosphoglycerate and orthophosphate. Functionally, this protein plays a role in synthesis of starch. It catalyzes the synthesis of the activated glycosyl donor, ADP-glucose from Glc-1-P and ATP. In Triticum aestivum (Wheat), this protein is Glucose-1-phosphate adenylyltransferase large subunit (AGA.1).